We begin with the raw amino-acid sequence, 178 residues long: MINNQTLARPYAKAAFEYASAANGSDAWSGMLGLAAAVVEAPEVAELLRNPRLTRESKVEAVLRLFADDVDEAFRNFIANLGEHDRLFVLPTVREQFEAYKAEAEKTIDVELETAYELSAEQLETLAAALSKRLDRSVNPRQVVNPALIGGLVIRAGDLVVDGSVRGKLSQLAESLKS.

Belongs to the ATPase delta chain family. As to quaternary structure, F-type ATPases have 2 components, F(1) - the catalytic core - and F(0) - the membrane proton channel. F(1) has five subunits: alpha(3), beta(3), gamma(1), delta(1), epsilon(1). F(0) has three main subunits: a(1), b(2) and c(10-14). The alpha and beta chains form an alternating ring which encloses part of the gamma chain. F(1) is attached to F(0) by a central stalk formed by the gamma and epsilon chains, while a peripheral stalk is formed by the delta and b chains.

Its subcellular location is the cell inner membrane. Its function is as follows. F(1)F(0) ATP synthase produces ATP from ADP in the presence of a proton or sodium gradient. F-type ATPases consist of two structural domains, F(1) containing the extramembraneous catalytic core and F(0) containing the membrane proton channel, linked together by a central stalk and a peripheral stalk. During catalysis, ATP synthesis in the catalytic domain of F(1) is coupled via a rotary mechanism of the central stalk subunits to proton translocation. Functionally, this protein is part of the stalk that links CF(0) to CF(1). It either transmits conformational changes from CF(0) to CF(1) or is implicated in proton conduction. This Azotobacter vinelandii (strain DJ / ATCC BAA-1303) protein is ATP synthase subunit delta.